The chain runs to 554 residues: uncharacterized protein (554 aa).

This is an uncharacterized protein from Acidianus sp. F28 (AFV-2).